The sequence spans 287 residues: UPF0761 membrane protein MS0032 (287 aa).

A run of 6 helical transmembrane segments spans residues 37-57 (MLAI…FPMF), 93-113 (SMSA…INQI), 128-148 (FIFS…FIGM), 174-194 (LLSF…YTLV), 204-224 (AAVG…AFAW), and 238-258 (AMAT…FILL).

This sequence belongs to the UPF0761 family.

The protein resides in the cell inner membrane. This is UPF0761 membrane protein MS0032 from Mannheimia succiniciproducens (strain KCTC 0769BP / MBEL55E).